The sequence spans 929 residues: Formin-like protein 11 (929 aa).

The first 28 residues, 1-28 (MMRHCRREWLLALCLISVQLLIPTGCEG), serve as a signal peptide directing secretion. The disordered stretch occupies residues 153-215 (ESSTTKSIPE…KSVAEKKKDS (63 aa)). Over residues 171 to 189 (KTSTPKPVNKPTDSVSSPP) the composition is skewed to polar residues. Positions 191 to 215 (RSYKSAPTEKENPPTKSVAEKKKDS) are enriched in basic and acidic residues. A helical transmembrane segment spans residues 222–242 (FIGLSIAGIALMAHLCLCCFM). Disordered stretches follow at residues 372–472 (PVGS…ENSN) and 726–749 (AAKE…SEQT). Pro residues predominate over residues 382–447 (MQPPVMPPPI…GPPRPPPPAM (66 aa)). Residues 468–898 (VENSNEAKTK…KAKAKQPSQS (431 aa)) enclose the FH2 domain. Residues 738 to 749 (KTDDLGDKSEQT) show a composition bias toward basic and acidic residues.

The protein belongs to the formin-like family. Class-I subfamily.

Its subcellular location is the membrane. The chain is Formin-like protein 11 (FH11) from Oryza sativa subsp. japonica (Rice).